Reading from the N-terminus, the 190-residue chain is Guanylate kinase (190 aa).

One can recognise a Guanylate kinase-like domain in the interval 8-188; sequence GRLVILAGPS…AVKAIEDVLL (181 aa). An ATP-binding site is contributed by 15-22; the sequence is GPSAVGKS.

This sequence belongs to the guanylate kinase family.

Its subcellular location is the cytoplasm. The enzyme catalyses GMP + ATP = GDP + ADP. Functionally, essential for recycling GMP and indirectly, cGMP. The sequence is that of Guanylate kinase from Corynebacterium glutamicum (strain ATCC 13032 / DSM 20300 / JCM 1318 / BCRC 11384 / CCUG 27702 / LMG 3730 / NBRC 12168 / NCIMB 10025 / NRRL B-2784 / 534).